The primary structure comprises 331 residues: Ferrochelatase (331 aa).

Fe cation is bound by residues histidine 187 and glutamate 286.

Belongs to the ferrochelatase family.

The protein localises to the cytoplasm. The enzyme catalyses heme b + 2 H(+) = protoporphyrin IX + Fe(2+). Its pathway is porphyrin-containing compound metabolism; protoheme biosynthesis; protoheme from protoporphyrin-IX: step 1/1. Its function is as follows. Catalyzes the ferrous insertion into protoporphyrin IX. The protein is Ferrochelatase of Legionella pneumophila (strain Corby).